We begin with the raw amino-acid sequence, 337 residues long: Inositol 2-dehydrogenase 1 (337 aa).

Belongs to the Gfo/Idh/MocA family. Homotetramer.

The enzyme catalyses myo-inositol + NAD(+) = scyllo-inosose + NADH + H(+). Functionally, involved in the oxidation of myo-inositol (MI) to 2-keto-myo-inositol (2KMI or 2-inosose). This Paenarthrobacter aurescens (strain TC1) protein is Inositol 2-dehydrogenase 1.